A 377-amino-acid polypeptide reads, in one-letter code: Histone deacetylase 8 (377 aa).

A histone deacetylase region spans residues 14–324; sequence LPPVYIYSPE…WTYLTGVILG (311 aa). The residue at position 39 (Ser39) is a Phosphoserine. A substrate-binding site is contributed by Asp101. His143 serves as the catalytic Proton acceptor. Gly151 serves as a coordination point for substrate. The a divalent metal cation site is built by Asp178, His180, and Asp267. A substrate-binding site is contributed by Tyr306.

It belongs to the histone deacetylase family. HD type 1 subfamily. In terms of assembly, interacts with CBFA2T3. Interacts with phosphorylated SMG5/EST1B; this interaction protects SMG5 from ubiquitin-mediated degradation. Associates with alpha-SMA (smooth muscle alpha-actin). The cofactor is a divalent metal cation. Phosphorylated by PKA on serine 39. Phosphorylation reduces deacetylase activity observed preferentially on histones H3 and H4.

Its subcellular location is the nucleus. It is found in the chromosome. The protein localises to the cytoplasm. It catalyses the reaction N(6)-acetyl-L-lysyl-[histone] + H2O = L-lysyl-[histone] + acetate. The catalysed reaction is N(6)-acetyl-L-lysyl-[protein] + H2O = L-lysyl-[protein] + acetate. It carries out the reaction N(6)-(2E)-butenoyl-L-lysyl-[protein] + H2O = (2E)-2-butenoate + L-lysyl-[protein]. With respect to regulation, its activity is inhibited by trichostatin A (TSA) and butyrate, 2 well known histone deacetylase inhibitors. Its function is as follows. Histone deacetylase that catalyzes the deacetylation of lysine residues on the N-terminal part of the core histones (H2A, H2B, H3 and H4). Histone deacetylation gives a tag for epigenetic repression and plays an important role in transcriptional regulation, cell cycle progression and developmental events. Histone deacetylases act via the formation of large multiprotein complexes. Also involved in the deacetylation of cohesin complex protein SMC3 regulating release of cohesin complexes from chromatin. May play a role in smooth muscle cell contractility. In addition to protein deacetylase activity, also has protein-lysine deacylase activity: acts as a protein decrotonylase by mediating decrotonylation ((2E)-butenoyl) of histones. The chain is Histone deacetylase 8 (HDAC8) from Bos taurus (Bovine).